Here is a 234-residue protein sequence, read N- to C-terminus: Sugar fermentation stimulation protein homolog (234 aa).

Belongs to the SfsA family.

This chain is Sugar fermentation stimulation protein homolog, found in Pectobacterium carotovorum subsp. carotovorum (strain PC1).